The sequence spans 694 residues: Zinc finger BED domain-containing protein 5 (694 aa).

The segment at 109 to 165 adopts a BED-type zinc-finger fold; sequence RKYDESYLSFGFTYFGNRDAPHAQCVLCKKILSNSSLAPSKLRRHLETKHAAYKDKD. Zn(2+) contacts are provided by C133, C136, H153, and H158.

The protein is Zinc finger BED domain-containing protein 5 (ZBED5) of Canis lupus familiaris (Dog).